The primary structure comprises 282 residues: Protein-glutamine deamidase Cif (282 aa).

The tract at residues 1–16 (MKDITLPPPTSASCLT) is translocation domain (TD). Catalysis depends on residues C109, H165, and Q185.

This sequence belongs to the Cif family.

It localises to the secreted. Its subcellular location is the host nucleus. It catalyses the reaction L-glutaminyl-[protein] + H2O = L-glutamyl-[protein] + NH4(+). In terms of biological role, protein-glutamine deamidase effector that inhibits the host cell cycle and other key cellular processes such as the actin network and programmed-cell death. Acts by mediating the side chain deamidation of 'Gln-40' of host NEDD8, converting it to glutamate, thereby abolishing the activity of cullin-RING-based E3 ubiquitin-protein ligase complexes (CRL complexes). Inactivation of CRL complexes prevents ubiquitination and subsequent degradation of the cyclin-dependent kinase inhibitors CDKN1A/p21 and CDKN1B/p27, leading to G1 and G2 cell cycle arrests in host cells. Also able to catalyze deamidation of 'Gln-40' of host ubiquitin in vitro; however, NEDD8 constitutes the preferred substrate in vivo. The polypeptide is Protein-glutamine deamidase Cif (Escherichia coli).